Consider the following 501-residue polypeptide: uncharacterized protein (501 aa).

Disordered stretches follow at residues Glu-179–Ala-404 and Ser-480–Asp-501. Basic and acidic residues predominate over residues Ser-191–Arg-200. A compositionally biased stretch (basic residues) spans Asp-201–Lys-214. The segment covering Lys-215–Ile-226 has biased composition (basic and acidic residues). Residues Ser-231–Thr-274 show a composition bias toward low complexity. The segment covering Asn-304–Ser-316 has biased composition (basic and acidic residues). The span at Asp-333–Asp-352 shows a compositional bias: polar residues. Positions Glu-379–Thr-403 are enriched in acidic residues.

This is an uncharacterized protein from Acanthamoeba polyphaga mimivirus (APMV).